The following is a 321-amino-acid chain: Biotin synthase (321 aa).

A Radical SAM core domain is found at 45–271 (YYGKKVKLNM…INPTKEIRIA (227 aa)). [4Fe-4S] cluster is bound by residues Cys63, Cys67, and Cys70. Residues Cys106, Cys139, Cys199, and Arg269 each contribute to the [2Fe-2S] cluster site.

The protein belongs to the radical SAM superfamily. Biotin synthase family. As to quaternary structure, homodimer. [4Fe-4S] cluster is required as a cofactor. The cofactor is [2Fe-2S] cluster.

It catalyses the reaction (4R,5S)-dethiobiotin + (sulfur carrier)-SH + 2 reduced [2Fe-2S]-[ferredoxin] + 2 S-adenosyl-L-methionine = (sulfur carrier)-H + biotin + 2 5'-deoxyadenosine + 2 L-methionine + 2 oxidized [2Fe-2S]-[ferredoxin]. Its pathway is cofactor biosynthesis; biotin biosynthesis; biotin from 7,8-diaminononanoate: step 2/2. In terms of biological role, catalyzes the conversion of dethiobiotin (DTB) to biotin by the insertion of a sulfur atom into dethiobiotin via a radical-based mechanism. The chain is Biotin synthase from Staphylococcus epidermidis (strain ATCC 35984 / DSM 28319 / BCRC 17069 / CCUG 31568 / BM 3577 / RP62A).